The chain runs to 953 residues: Probable LRR receptor-like serine/threonine-protein kinase At1g53420 (953 aa).

Residues 1–22 (MSLNRFLFTSFSFFLFFIVHFA) form the signal peptide. At 23-566 (SSATLPTQEG…SPRNGMSTGT (544 aa)) the chain is on the extracellular side. 6 LRR repeats span residues 63 to 86 (WSTISRNLKRENLQGSLPKELVGL), 88 to 110 (LLQEIDLSRNYLNGSIPPEWGVL), 111 to 132 (PLVNIWLLGNRLTGPIPKEFGN), 135 to 158 (TLTSLVLEANQLSGELPLELGNLP), 159 to 182 (NIQQMILSSNNFNGEIPSTFAKLT), and 183 to 205 (TLRDFRVSDNQLSGTIPDFIQKW). N-linked (GlcNAc...) asparagine glycosylation is found at Asn-100 and Asn-132. 5 N-linked (GlcNAc...) asparagine glycosylation sites follow: Asn-265, Asn-315, Asn-335, Asn-378, and Asn-423. Residues 567–587 (LHTLVVILSIFIVFLVFGTLW) traverse the membrane as a helical segment. At 588–953 (KKGYLRSKSQ…SDRSESSADH (366 aa)) the chain is on the cytoplasmic side. The Protein kinase domain maps to 624–901 (FDSANRIGEG…VKMLEGKKMV (278 aa)). Residues 630 to 638 (IGEGGFGPV) and Lys-652 contribute to the ATP site. Phosphotyrosine is present on Tyr-697. Asp-750 functions as the Proton acceptor in the catalytic mechanism. A Phosphoserine modification is found at Ser-783. Residues Thr-784 and Thr-789 each carry the phosphothreonine modification. Tyr-797 carries the phosphotyrosine modification.

It belongs to the protein kinase superfamily. Ser/Thr protein kinase family.

It localises to the membrane. It catalyses the reaction L-seryl-[protein] + ATP = O-phospho-L-seryl-[protein] + ADP + H(+). The catalysed reaction is L-threonyl-[protein] + ATP = O-phospho-L-threonyl-[protein] + ADP + H(+). This is Probable LRR receptor-like serine/threonine-protein kinase At1g53420 from Arabidopsis thaliana (Mouse-ear cress).